The chain runs to 348 residues: tRNA pseudouridine synthase D (348 aa).

D78 (nucleophile) is an active-site residue. One can recognise a TRUD domain in the interval 150–304 (GLPNFFGPQR…AEGTRRAARL (155 aa)).

Belongs to the pseudouridine synthase TruD family.

It carries out the reaction uridine(13) in tRNA = pseudouridine(13) in tRNA. Its function is as follows. Responsible for synthesis of pseudouridine from uracil-13 in transfer RNAs. The sequence is that of tRNA pseudouridine synthase D from Anaeromyxobacter dehalogenans (strain 2CP-1 / ATCC BAA-258).